Consider the following 120-residue polypeptide: Large ribosomal subunit protein uL18 (120 aa).

This sequence belongs to the universal ribosomal protein uL18 family. Part of the 50S ribosomal subunit; part of the 5S rRNA/L5/L18/L25 subcomplex. Contacts the 5S and 23S rRNAs.

Its function is as follows. This is one of the proteins that bind and probably mediate the attachment of the 5S RNA into the large ribosomal subunit, where it forms part of the central protuberance. The sequence is that of Large ribosomal subunit protein uL18 from Bacillus licheniformis (strain ATCC 14580 / DSM 13 / JCM 2505 / CCUG 7422 / NBRC 12200 / NCIMB 9375 / NCTC 10341 / NRRL NRS-1264 / Gibson 46).